The following is a 190-amino-acid chain: Putative manganese efflux pump MntP (190 aa).

6 helical membrane-spanning segments follow: residues 3–23 (PISL…AALG), 41–61 (LIFG…GQVA), 69–89 (DHWI…YNGL), 105–125 (FWIL…VGVG), 133–153 (IMVA…IGVM), and 168–188 (IVGG…HLTA).

This sequence belongs to the MntP (TC 9.B.29) family.

It is found in the cell inner membrane. Functionally, probably functions as a manganese efflux pump. This chain is Putative manganese efflux pump MntP, found in Pseudomonas syringae pv. tomato (strain ATCC BAA-871 / DC3000).